Reading from the N-terminus, the 295-residue chain is Glycine--tRNA ligase alpha subunit (295 aa).

The protein belongs to the class-II aminoacyl-tRNA synthetase family. As to quaternary structure, tetramer of two alpha and two beta subunits.

The protein localises to the cytoplasm. The enzyme catalyses tRNA(Gly) + glycine + ATP = glycyl-tRNA(Gly) + AMP + diphosphate. The chain is Glycine--tRNA ligase alpha subunit from Bacillus licheniformis (strain ATCC 14580 / DSM 13 / JCM 2505 / CCUG 7422 / NBRC 12200 / NCIMB 9375 / NCTC 10341 / NRRL NRS-1264 / Gibson 46).